Reading from the N-terminus, the 272-residue chain is Glutamate racemase (272 aa).

Residues 16–17 (DS) and 48–49 (YG) contribute to the substrate site. Cys-79 (proton donor/acceptor) is an active-site residue. Residue 80-81 (NT) participates in substrate binding. Catalysis depends on Cys-191, which acts as the Proton donor/acceptor. Substrate is bound at residue 192 to 193 (TH).

It belongs to the aspartate/glutamate racemases family.

The enzyme catalyses L-glutamate = D-glutamate. Its pathway is cell wall biogenesis; peptidoglycan biosynthesis. Functionally, provides the (R)-glutamate required for cell wall biosynthesis. The protein is Glutamate racemase of Chlorobium phaeobacteroides (strain DSM 266 / SMG 266 / 2430).